A 288-amino-acid polypeptide reads, in one-letter code: Polyamine aminopropyltransferase (288 aa).

Residues 9-242 (SEWLDEYHQG…GLWSWTFASM (234 aa)) enclose the PABS domain. Gln-36 is a binding site for S-methyl-5'-thioadenosine. His-67 and Asp-91 together coordinate spermidine. S-methyl-5'-thioadenosine is bound by residues Glu-111 and 143-144 (NG). Catalysis depends on Asp-162, which acts as the Proton acceptor. Pro-169 contributes to the S-methyl-5'-thioadenosine binding site.

It belongs to the spermidine/spermine synthase family. In terms of assembly, homodimer or homotetramer.

The protein localises to the cytoplasm. It carries out the reaction S-adenosyl 3-(methylsulfanyl)propylamine + putrescine = S-methyl-5'-thioadenosine + spermidine + H(+). It participates in amine and polyamine biosynthesis; spermidine biosynthesis; spermidine from putrescine: step 1/1. Functionally, catalyzes the irreversible transfer of a propylamine group from the amino donor S-adenosylmethioninamine (decarboxy-AdoMet) to putrescine (1,4-diaminobutane) to yield spermidine. The sequence is that of Polyamine aminopropyltransferase from Prochlorococcus marinus (strain NATL2A).